The chain runs to 349 residues: Farnesyl pyrophosphate synthase (349 aa).

Positions 48, 51, and 90 each coordinate isopentenyl diphosphate. Positions 97 and 101 each coordinate Mg(2+). Arg-106 lines the dimethylallyl diphosphate pocket. Residue Arg-107 participates in isopentenyl diphosphate binding. Dimethylallyl diphosphate contacts are provided by Lys-194, Thr-195, Gln-234, Lys-251, and Lys-260.

It belongs to the FPP/GGPP synthase family. It depends on Mg(2+) as a cofactor.

It is found in the cytoplasm. The enzyme catalyses isopentenyl diphosphate + dimethylallyl diphosphate = (2E)-geranyl diphosphate + diphosphate. The catalysed reaction is isopentenyl diphosphate + (2E)-geranyl diphosphate = (2E,6E)-farnesyl diphosphate + diphosphate. It participates in isoprenoid biosynthesis; farnesyl diphosphate biosynthesis; farnesyl diphosphate from geranyl diphosphate and isopentenyl diphosphate: step 1/1. Its pathway is isoprenoid biosynthesis; geranyl diphosphate biosynthesis; geranyl diphosphate from dimethylallyl diphosphate and isopentenyl diphosphate: step 1/1. Its function is as follows. Catalyzes the sequential condensation of isopentenyl pyrophosphate with the allylic pyrophosphates, dimethylallyl pyrophosphate, and then with the resultant geranylpyrophosphate to the ultimate product farnesyl pyrophosphate. In Kluyveromyces lactis (strain ATCC 8585 / CBS 2359 / DSM 70799 / NBRC 1267 / NRRL Y-1140 / WM37) (Yeast), this protein is Farnesyl pyrophosphate synthase (FPS1).